The following is a 144-amino-acid chain: Transcription antitermination protein NusB (144 aa).

It belongs to the NusB family.

In terms of biological role, involved in transcription antitermination. Required for transcription of ribosomal RNA (rRNA) genes. Binds specifically to the boxA antiterminator sequence of the ribosomal RNA (rrn) operons. The polypeptide is Transcription antitermination protein NusB (Dictyoglomus thermophilum (strain ATCC 35947 / DSM 3960 / H-6-12)).